Here is a 333-residue protein sequence, read N- to C-terminus: Isopenicillin N synthase (333 aa).

R87, Y91, and Y191 together coordinate isopenicillin N. The N-[(5S)-5-amino-5-carboxypentanoyl]-L-cysteinyl-D-valine site is built by R87, Y91, Y191, H216, and D218. Residues 180 to 290 (DTLSCRSLMI…RLSLPFFLHA (111 aa)) enclose the Fe2OG dioxygenase domain. The Fe(2+) site is built by H216, D218, and H272. R281 contacts 2-oxoglutarate. S283 contributes to the isopenicillin N binding site. S283 contacts N-[(5S)-5-amino-5-carboxypentanoyl]-L-cysteinyl-D-valine.

The protein belongs to the iron/ascorbate-dependent oxidoreductase family. Fe cation serves as cofactor. Requires L-ascorbate as cofactor.

It carries out the reaction N-[(5S)-5-amino-5-carboxypentanoyl]-L-cysteinyl-D-valine + O2 = isopenicillin N + 2 H2O. The protein operates within antibiotic biosynthesis; penicillin G biosynthesis; penicillin G from L-alpha-aminoadipate and L-cysteine and L-valine: step 2/3. Removes, in the presence of oxygen, 4 hydrogen atoms from delta-L-(alpha-aminoadipyl)-L-cysteinyl-D-valine (ACV) to form the azetidinone and thiazolidine rings of isopenicillin. This chain is Isopenicillin N synthase (pcbC), found in Streptomyces microflavus (Streptomyces lipmanii).